An 882-amino-acid chain; its full sequence is Alanine--tRNA ligase (882 aa).

Zn(2+) contacts are provided by histidine 570, histidine 574, cysteine 672, and histidine 676.

This sequence belongs to the class-II aminoacyl-tRNA synthetase family. Zn(2+) is required as a cofactor.

Its subcellular location is the cytoplasm. The catalysed reaction is tRNA(Ala) + L-alanine + ATP = L-alanyl-tRNA(Ala) + AMP + diphosphate. Catalyzes the attachment of alanine to tRNA(Ala) in a two-step reaction: alanine is first activated by ATP to form Ala-AMP and then transferred to the acceptor end of tRNA(Ala). Also edits incorrectly charged Ser-tRNA(Ala) and Gly-tRNA(Ala) via its editing domain. This is Alanine--tRNA ligase from Xanthomonas euvesicatoria pv. vesicatoria (strain 85-10) (Xanthomonas campestris pv. vesicatoria).